The sequence spans 473 residues: Ammonium transporter Rh type C (473 aa).

Residues 1–9 (MLRNSNMRW) lie on the Cytoplasmic side of the membrane. The chain crosses the membrane as a helical span at residues 10-30 (RLPLICFVWEIAMIVLFGIFV). Residues 31–61 (RYNDEADPHWPIFMKHENITSDIENDFYFRY) lie on the Extracellular side of the membrane. An N-linked (GlcNAc...) asparagine glycan is attached at N48. Residues 62–82 (PSFQDVHVMIFVGFGFLMTFL) traverse the membrane as a helical segment. Residues 83-86 (QRYG) are Cytoplasmic-facing. Residues 87 to 107 (FGSVAFNFLLAAFGIQWALLM) form a helical membrane-spanning segment. At 108-125 (QGWFHTFVNGKILIGVES) the chain is on the extracellular side. A helical membrane pass occupies residues 126–145 (LINADFCVGSVCIAFGGVLG). Residues 146–151 (KVSPVQ) lie on the Cytoplasmic side of the membrane. A helical transmembrane segment spans residues 152 to 171 (IMLMTLFQVTLFAVNEWILL). The Extracellular portion of the chain corresponds to 172–179 (NKLHVIDA). Residues 180–200 (GGSMTIHTFGAYFGLTVAWIL) traverse the membrane as a helical segment. Residues 201 to 219 (SRPKLKQNNDKEGSTYISD) lie on the Cytoplasmic side of the membrane. The chain crosses the membrane as a helical span at residues 220–240 (LFSMIGTLFLWMYWPSFNSAI). The Extracellular portion of the chain corresponds to 241 to 251 (SYHGDAQHRAA). The chain crosses the membrane as a helical span at residues 252–272 (INTYCSLAACVLTTVAISSVV). Residues 273–285 (NKKGKLEMVHIQN) lie on the Cytoplasmic side of the membrane. Residues 286–306 (ATLAGGVAVGTAAEMMLTPYG) traverse the membrane as a helical segment. A topological domain (extracellular) is located at residue S307. A helical membrane pass occupies residues 308–328 (LIVGFICGIVSTLGFTYLSPI). The Cytoplasmic portion of the chain corresponds to 329-343 (LSNKLRLHDTCGIHN). A helical transmembrane segment spans residues 344 to 364 (LHAIPGLIGGIVGAVTAACAT). Topologically, residues 365 to 396 (EGVYTAEGLKKMFHFEGEYADRTPSIQGIYQA) are extracellular. Residues 397-417 (AGIGVSLAFGIVGGTVVGCIL) form a helical membrane-spanning segment. Residues 418 to 473 (KLPIWGDPSDENCFDDDVYWELREEDEEEHLGAANQYITHLPENFKLPDRTEISFK) are Cytoplasmic-facing.

This sequence belongs to the ammonium transporter (TC 2.A.49) family. Rh subfamily. In terms of assembly, homotrimer.

Its subcellular location is the apical cell membrane. Its function is as follows. Functions as an ammonia transporter. This is Ammonium transporter Rh type C (rhcg) from Xenopus laevis (African clawed frog).